We begin with the raw amino-acid sequence, 286 residues long: Shikimate dehydrogenase (NADP(+)) (286 aa).

Shikimate-binding positions include 21 to 23 (TLS) and Thr-68. Lys-72 serves as the catalytic Proton acceptor. Residue Glu-84 coordinates NADP(+). Positions 93 and 108 each coordinate shikimate. Residues 132-136 (GNGGA) and Leu-230 contribute to the NADP(+) site. Tyr-232 contributes to the shikimate binding site. Gly-253 lines the NADP(+) pocket.

This sequence belongs to the shikimate dehydrogenase family. In terms of assembly, homodimer.

It carries out the reaction shikimate + NADP(+) = 3-dehydroshikimate + NADPH + H(+). It functions in the pathway metabolic intermediate biosynthesis; chorismate biosynthesis; chorismate from D-erythrose 4-phosphate and phosphoenolpyruvate: step 4/7. Functionally, involved in the biosynthesis of the chorismate, which leads to the biosynthesis of aromatic amino acids. Catalyzes the reversible NADPH linked reduction of 3-dehydroshikimate (DHSA) to yield shikimate (SA). This is Shikimate dehydrogenase (NADP(+)) from Microcystis aeruginosa (strain NIES-843 / IAM M-2473).